Consider the following 84-residue polypeptide: UPF0473 protein CLI_2624 (84 aa).

This sequence belongs to the UPF0473 family.

The protein is UPF0473 protein CLI_2624 of Clostridium botulinum (strain Langeland / NCTC 10281 / Type F).